A 154-amino-acid chain; its full sequence is Myoglobin (154 aa).

The Globin domain occupies glycine 2–lysine 148. Residue serine 4 is modified to Phosphoserine. Histidine 65 provides a ligand contact to nitrite. Histidine 65 is an O2 binding site. The residue at position 68 (threonine 68) is a Phosphothreonine. Heme b is bound at residue histidine 94.

The protein belongs to the globin family. In terms of assembly, monomeric.

It is found in the cytoplasm. The protein localises to the sarcoplasm. It catalyses the reaction Fe(III)-heme b-[protein] + nitric oxide + H2O = Fe(II)-heme b-[protein] + nitrite + 2 H(+). The catalysed reaction is H2O2 + AH2 = A + 2 H2O. In terms of biological role, monomeric heme protein which primary function is to store oxygen and facilitate its diffusion within muscle tissues. Reversibly binds oxygen through a pentacoordinated heme iron and enables its timely and efficient release as needed during periods of heightened demand. Depending on the oxidative conditions of tissues and cells, and in addition to its ability to bind oxygen, it also has a nitrite reductase activity whereby it regulates the production of bioactive nitric oxide. Under stress conditions, like hypoxia and anoxia, it also protects cells against reactive oxygen species thanks to its pseudoperoxidase activity. The sequence is that of Myoglobin (MB) from Lutra lutra (European river otter).